The sequence spans 412 residues: D-nopaline dehydrogenase (412 aa).

The protein belongs to the lysopine/nopaline/octopine/opine/vitopine dehydrogenases family. As to quaternary structure, homotetramer.

The enzyme catalyses D-nopaline + NADP(+) + H2O = L-arginine + 2-oxoglutarate + NADPH + H(+). The sequence is that of D-nopaline dehydrogenase (nos) from Agrobacterium vitis (Rhizobium vitis).